A 213-amino-acid chain; its full sequence is Thymidylate kinase (213 aa).

ATP is bound at residue 9-16 (GVEGCGKT).

Belongs to the thymidylate kinase family.

The catalysed reaction is dTMP + ATP = dTDP + ADP. Its function is as follows. Phosphorylation of dTMP to form dTDP in both de novo and salvage pathways of dTTP synthesis. This is Thymidylate kinase from Geotalea uraniireducens (strain Rf4) (Geobacter uraniireducens).